Consider the following 151-residue polypeptide: Meiotically up-regulated gene 114 protein (151 aa).

It localises to the cytoplasm. Its function is as follows. Has a role in meiosis. This Schizosaccharomyces pombe (strain 972 / ATCC 24843) (Fission yeast) protein is Meiotically up-regulated gene 114 protein (mug114).